A 704-amino-acid polypeptide reads, in one-letter code: Low calcium response locus protein D (704 aa).

A run of 7 helical transmembrane segments spans residues 18-35, 42-61, 108-132, 200-220, 235-259, 278-297, and 304-320; these read IMLA…VLPL, ILIA…AIYI, FVVG…FLVI, AIAG…IGVT, ILTV…GIIV, VVAQ…LFGL, and VTFL…GYML.

It belongs to the FHIPEP (flagella/HR/invasion proteins export pore) family.

It is found in the cell inner membrane. Could be involved in the secretion of the yop virulence proteins. The chain is Low calcium response locus protein D (lcrD) from Yersinia pestis.